A 484-amino-acid chain; its full sequence is Alkaline nuclease (484 aa).

This sequence belongs to the herpesviridae alkaline nuclease family. In terms of assembly, interacts with major DNA-binding protein; this interaction increases the nuclease processivity of the alkaline exonuclease.

It is found in the host nucleus. Its subcellular location is the host cytoplasm. Plays a role in processing non linear or branched viral DNA intermediates in order to promote the production of mature packaged unit-length linear progeny viral DNA molecules. Exhibits endonuclease and exonuclease activities and accepts both double-stranded and single-stranded DNA as substrate. Exonuclease digestion of DNA is in the 5'-&gt; 3' direction and the products are 5'-monophosphate nucleosides. Additionally, forms a recombinase with the major DNA-binding protein, which displays strand exchange activity. This Elephas maximus (Indian elephant) protein is Alkaline nuclease.